The following is a 169-amino-acid chain: MMENPIKGRVWKFGNDIDTDVIIPGKYLRTKDMQVFAAHAMEGIDPGFSKKAKPGDIIVAGDNFGCGSSREQAPLALKHAGIACIVAKSFARIFFRNAINIGLPLMEADIECEEGDQIEVDLLKGEVKVSGKGVFRGNKLPDFLLDMLTDGGLVAHRKKVRDQEKEESA.

The short motif at 27-30 (YLRT) is the YLRT element.

It belongs to the LeuD family. LeuD type 2 subfamily. Heterotetramer of 2 HacA and 2 HacB proteins.

It carries out the reaction (2R)-homocitrate = (2R,3S)-homoisocitrate. It catalyses the reaction (2R)-homocitrate = cis-homoaconitate + H2O. The enzyme catalyses (2R,3S)-homoisocitrate = cis-homoaconitate + H2O. The catalysed reaction is cis-(homo)2aconitate + H2O = (2R,3S)-iso(homo)2citrate. It carries out the reaction cis-(homo)3aconitate + H2O = (2R,3S)-iso(homo)3citrate. Its pathway is organic acid metabolism; 2-oxosuberate biosynthesis. In terms of biological role, component of a hydro-lyase with broad substrate specificity for cis-unsaturated tricarboxylic acids. Catalyzes both the reversible dehydration of (R)-homocitrate ((R)-2-hydroxybutane-1,2,4-tricarboxylate) to produce cis-homoaconitate ((Z)-but-1-ene-1,2,4-tricarboxylate), and its hydration to homoisocitrate ((1R,2S)-1-hydroxybutane-1,2,4-tricarboxylate). Is also able to hydrate the analogous longer chain substrates cis-homo(2)-aconitate, cis-homo(3)-aconitate. These reactions are part of the biosynthesis pathway of coenzyme B. This Methanosarcina mazei (strain ATCC BAA-159 / DSM 3647 / Goe1 / Go1 / JCM 11833 / OCM 88) (Methanosarcina frisia) protein is Methanogen homoaconitase small subunit (hacB).